The primary structure comprises 70 residues: Conotoxin TxMMSK-02 (70 aa).

The signal sequence occupies residues 1-20 (MMSKLGALLTICLLLFSLTA). Residues 21-53 (VPLDGDQHADQPAQRLQDRIPTEDHPLFDPNKR) constitute a propeptide that is removed on maturation. Intrachain disulfides connect Cys-54–Cys-68, Cys-55–Cys-64, and Cys-60–Cys-67. Pro-66 carries the post-translational modification 4-hydroxyproline. A Tyrosine amide modification is found at Tyr-69.

Belongs to the conotoxin M superfamily. In terms of tissue distribution, expressed by the venom duct.

Its subcellular location is the secreted. This is Conotoxin TxMMSK-02 from Conus textile (Cloth-of-gold cone).